Reading from the N-terminus, the 188-residue chain is Peptidyl-tRNA hydrolase (188 aa).

Residue Y18 coordinates tRNA. H23 (proton acceptor) is an active-site residue. TRNA is bound by residues Y67, N69, and N115.

This sequence belongs to the PTH family. Monomer.

Its subcellular location is the cytoplasm. The enzyme catalyses an N-acyl-L-alpha-aminoacyl-tRNA + H2O = an N-acyl-L-amino acid + a tRNA + H(+). Hydrolyzes ribosome-free peptidyl-tRNAs (with 1 or more amino acids incorporated), which drop off the ribosome during protein synthesis, or as a result of ribosome stalling. Its function is as follows. Catalyzes the release of premature peptidyl moieties from peptidyl-tRNA molecules trapped in stalled 50S ribosomal subunits, and thus maintains levels of free tRNAs and 50S ribosomes. The polypeptide is Peptidyl-tRNA hydrolase (Salinibacter ruber (strain DSM 13855 / M31)).